The primary structure comprises 201 residues: Elongation factor Ts (201 aa).

Residues 81 to 84 form an involved in Mg(2+) ion dislocation from EF-Tu region; the sequence is TDFV.

This sequence belongs to the EF-Ts family.

It localises to the cytoplasm. Functionally, associates with the EF-Tu.GDP complex and induces the exchange of GDP to GTP. It remains bound to the aminoacyl-tRNA.EF-Tu.GTP complex up to the GTP hydrolysis stage on the ribosome. The sequence is that of Elongation factor Ts from Syntrophus aciditrophicus (strain SB).